A 435-amino-acid chain; its full sequence is rRNA methyltransferase 3A, mitochondrial (435 aa).

The N-terminal 42 residues, 1–42 (MAALMYNVSRGLVMLGERSLFQRERYQILVNSRRFLRGLRRR), are a transit peptide targeting the mitochondrion. Positions 314-324 (KQLVSGQTENV) are enriched in polar residues. Positions 314–351 (KQLVSGQTENVSSDDYSESDSDDDDDEEEDEDSLPHVK) are disordered. Over residues 328–345 (DYSESDSDDDDDEEEDED) the composition is skewed to acidic residues. S-adenosyl-L-methionine contacts are provided by Gly369 and Leu402.

It belongs to the class IV-like SAM-binding methyltransferase superfamily. RNA methyltransferase TrmH family.

The protein resides in the mitochondrion. The enzyme catalyses a uridine in rRNA + S-adenosyl-L-methionine = a 2'-O-methyluridine in rRNA + S-adenosyl-L-homocysteine + H(+). In terms of biological role, S-adenosyl-L-methionine-dependent 2'-O-ribose methyltransferase that catalyzes the formation of 2'-O-methylguanosine at position 1485 (Gm1485) in the mitochondrial large subunit ribosomal RNA (mtLSU rRNA), a conserved modification in the peptidyl transferase domain of the mtLSU rRNA. Also required for formation of 2'-O-methyluridine at position 1484 (Um1484) mediated by MRM2. The protein is rRNA methyltransferase 3A, mitochondrial (mrm3a) of Danio rerio (Zebrafish).